The following is a 37-amino-acid chain: MVEPLLCGIVLGLVPVTIAGLFVTAYLQYLRGDLATY.

Residues 5-25 traverse the membrane as a helical segment; it reads LLCGIVLGLVPVTIAGLFVTA.

This sequence belongs to the PetG family. In terms of assembly, the 4 large subunits of the cytochrome b6-f complex are cytochrome b6, subunit IV (17 kDa polypeptide, PetD), cytochrome f and the Rieske protein, while the 4 small subunits are PetG, PetL, PetM and PetN. The complex functions as a dimer.

It is found in the plastid. The protein localises to the chloroplast thylakoid membrane. Its function is as follows. Component of the cytochrome b6-f complex, which mediates electron transfer between photosystem II (PSII) and photosystem I (PSI), cyclic electron flow around PSI, and state transitions. PetG is required for either the stability or assembly of the cytochrome b6-f complex. This is Cytochrome b6-f complex subunit 5 from Chlamydomonas reinhardtii (Chlamydomonas smithii).